Here is a 192-residue protein sequence, read N- to C-terminus: NADH:FMN oxidoreductase (192 aa).

The segment at 1 to 20 is disordered; sequence MSDKPNAVSSHTTPDVPEVA. FMN contacts are provided by residues 60–63, 77–84, Ala111, and Arg117; these read TATS and NIAETSSS.

The protein belongs to the non-flavoprotein flavin reductase family.

The protein resides in the cytoplasm. It catalyses the reaction FMNH2 + NAD(+) = FMN + NADH + 2 H(+). It participates in sulfur metabolism; dibenzothiophene degradation. Functionally, an NADH:FMN oxidoreductase which supplies reduced FMN for the '4S' desulfurization pathway that removes covalently bound sulfur from dibenzothiophene (DBT) without breaking carbon-carbon bonds. Provides DszA and DszC (DBTO2-monooxygenase and DBT-monooxygenase respectively) with reduced flavin (FMN). This Rhodococcus erythropolis (Arthrobacter picolinophilus) protein is NADH:FMN oxidoreductase.